A 458-amino-acid polypeptide reads, in one-letter code: Ammonium transporter Rh type B (458 aa).

Over M1–L13 the chain is Cytoplasmic. A helical transmembrane segment spans residues L14–V34. At R35 to Y61 the chain is on the extracellular side. N49 is a glycosylation site (N-linked (GlcNAc...) asparagine). The chain crosses the membrane as a helical span at residues P62–L82. At Q83–G86 the chain is on the cytoplasmic side. Residues Y87–V107 form a helical membrane-spanning segment. Residues Q108–E124 are Extracellular-facing. A helical membrane pass occupies residues S125–G145. The Cytoplasmic segment spans residues K146–P149. A helical transmembrane segment spans residues A150–L170. Topologically, residues L171–D178 are extracellular. A helical transmembrane segment spans residues A179–Y201. The Cytoplasmic segment spans residues R202 to D219. Residues L220–L240 form a helical membrane-spanning segment. Residues T241–A251 lie on the Extracellular side of the membrane. A helical transmembrane segment spans residues L252–V272. At G273–H282 the chain is on the cytoplasmic side. Residues V283–T303 traverse the membrane as a helical segment. A topological domain (extracellular) is located at residue P304. Residues F305–F325 form a helical membrane-spanning segment. At T326–G346 the chain is on the cytoplasmic side. A helical membrane pass occupies residues M347–A367. The Extracellular portion of the chain corresponds to Y368–Q393. The helical transmembrane segment at L394–L414 threads the bilayer. Residues L415 to A458 are Cytoplasmic-facing. Positions K416–P424 are interaction with ANK3. A Basolateral sorting signal motif is present at residues Y429–Q432.

The protein belongs to the ammonium transporter (TC 2.A.49) family. Rh subfamily. Interacts (via C-terminus) with ANK2 and ANK3; required for targeting to the basolateral membrane. In terms of processing, N-glycosylated.

It localises to the cell membrane. Its subcellular location is the basolateral cell membrane. It carries out the reaction NH4(+)(in) = NH4(+)(out). The enzyme catalyses methylamine(out) = methylamine(in). It catalyses the reaction CO2(out) = CO2(in). Its function is as follows. Ammonium transporter involved in the maintenance of acid-base homeostasis. Transports ammonium and its related derivative methylammonium across the basolateral plasma membrane of epithelial cells likely contributing to renal transepithelial ammonia transport and ammonia metabolism. May transport either NH4(+) or NH3 ammonia species predominantly mediating an electrogenic NH4(+) transport. May act as a CO2 channel providing for renal acid secretion. This is Ammonium transporter Rh type B (RHBG) from Oryctolagus cuniculus (Rabbit).